Reading from the N-terminus, the 324-residue chain is Transcription factor TCP24 (324 aa).

Residues 50-108 (GKDRHSKVLTSKGLRDRRIRLSVATAIQFYDLQDRLGFDQPSKAVEWLINAASDSITDL) enclose the TCP domain. Disordered stretches follow at residues 122–215 (QNQT…PMNH) and 261–297 (QRSSISSSSSSSSPMDSQSISFFMATPPPLDHHNHQL). Positions 127 to 142 (SACSSGTSESSLLSLS) are enriched in low complexity. Residues 144–162 (TEIRGKARERARERTAKDR) enclose the R domain. The span at 144–167 (TEIRGKARERARERTAKDRDKDLQ) shows a compositional bias: basic and acidic residues. Polar residues-rich tracts occupy residues 168-192 (NAHSSFTQLLTGGFDQQPSNRNWTG) and 200-212 (VQLQIPNSSSQEP). Residues 261–281 (QRSSISSSSSSSSPMDSQSIS) are compositionally biased toward low complexity.

Forms a heterodimeric complex with ABAP1. Interacts with SPL. Expressed in cotyledons, particularly in the vascular region, in leaves, roots, stems, buds, flowers and siliques.

Its subcellular location is the nucleus. In terms of biological role, plays a pivotal role in the control of morphogenesis of shoot organs by negatively regulating the expression of boundary-specific genes such as CUC genes, probably through the induction of miRNA (e.g. miR164). In association with ABAP1, exerts a negative role in cell proliferation in leaves, possibly by inhibiting mitotic DNA replication. Participates in ovule development. The sequence is that of Transcription factor TCP24 (TCP24) from Arabidopsis thaliana (Mouse-ear cress).